We begin with the raw amino-acid sequence, 253 residues long: Homeobox protein EMX2 (253 aa).

A DNA-binding region (homeobox) is located at residues 155–214 (PKRIRTAFSPSQLLRLEHAFEKNHYVVGAERKQLAHSLSLTETQVKVWFQNRRTKFKRQK). Positions 213-253 (QKLEEEGSDSQQKKKGTHHINRWRIATKQASPEEIDVTSDD) are disordered. The span at 225-234 (KKKGTHHINR) shows a compositional bias: basic residues.

It belongs to the EMX homeobox family. As to quaternary structure, interacts with translation initiation factor EIF4E.

The protein localises to the nucleus. It is found in the cell projection. It localises to the axon. Its function is as follows. Transcription factor, which in cooperation with EMX1, acts to generate the boundary between the roof and archipallium in the developing brain. May function in combination with OTX1/2 to specify cell fates in the developing central nervous system. In the inner ear, it controls the distribution of GPR156 at hair cell boundaries, and regulates the organization of stereociliary bundles in opposite orientations across the line of polarity reversal (LPR). This Bos taurus (Bovine) protein is Homeobox protein EMX2 (EMX2).